Consider the following 408-residue polypeptide: Peptidase T (408 aa).

His78 is a Zn(2+) binding site. Residue Asp80 is part of the active site. Asp140 lines the Zn(2+) pocket. Glu174 (proton acceptor) is an active-site residue. Positions 175, 197, and 379 each coordinate Zn(2+).

The protein belongs to the peptidase M20B family. Zn(2+) is required as a cofactor.

It is found in the cytoplasm. The catalysed reaction is Release of the N-terminal residue from a tripeptide.. Its function is as follows. Cleaves the N-terminal amino acid of tripeptides. This chain is Peptidase T, found in Staphylococcus aureus (strain MRSA252).